We begin with the raw amino-acid sequence, 107 residues long: MGMRIKKDDTVKVISGEYKGKIGKVLKTLPKEGKVIIEGVNFTKRHQRPTNQYREGGIIEREAPIYACKVMVVCPNCDKPTRVGHKKLESGEKVRVCKKCGEIIDKV.

This sequence belongs to the universal ribosomal protein uL24 family. In terms of assembly, part of the 50S ribosomal subunit.

Functionally, one of two assembly initiator proteins, it binds directly to the 5'-end of the 23S rRNA, where it nucleates assembly of the 50S subunit. In terms of biological role, one of the proteins that surrounds the polypeptide exit tunnel on the outside of the subunit. In Kosmotoga olearia (strain ATCC BAA-1733 / DSM 21960 / TBF 19.5.1), this protein is Large ribosomal subunit protein uL24.